Reading from the N-terminus, the 318-residue chain is UDP-N-acetylenolpyruvoylglucosamine reductase (318 aa).

The FAD-binding PCMH-type domain occupies 38–204; the sequence is IGGICPVVVE…LGIEILLKEG (167 aa). Arg-182 is an active-site residue. The interval 212–232 is disordered; sequence SLKDKRDRRNSSQPENKKSAG. The segment covering 213–229 has biased composition (basic and acidic residues); sequence LKDKRDRRNSSQPENKK. Ser-233 functions as the Proton donor in the catalytic mechanism. Glu-310 is an active-site residue.

It belongs to the MurB family. It depends on FAD as a cofactor.

It is found in the cytoplasm. The catalysed reaction is UDP-N-acetyl-alpha-D-muramate + NADP(+) = UDP-N-acetyl-3-O-(1-carboxyvinyl)-alpha-D-glucosamine + NADPH + H(+). The protein operates within cell wall biogenesis; peptidoglycan biosynthesis. Functionally, cell wall formation. In Leptospira borgpetersenii serovar Hardjo-bovis (strain L550), this protein is UDP-N-acetylenolpyruvoylglucosamine reductase.